The sequence spans 321 residues: Aspartate carbamoyltransferase catalytic subunit (321 aa).

Residues arginine 60 and threonine 61 each coordinate carbamoyl phosphate. Position 88 (lysine 88) interacts with L-aspartate. Carbamoyl phosphate is bound by residues arginine 110, histidine 138, and glutamine 141. L-aspartate-binding residues include arginine 171 and arginine 225. Carbamoyl phosphate-binding residues include glycine 266 and proline 267.

The protein belongs to the aspartate/ornithine carbamoyltransferase superfamily. ATCase family. As to quaternary structure, heterododecamer (2C3:3R2) of six catalytic PyrB chains organized as two trimers (C3), and six regulatory PyrI chains organized as three dimers (R2).

It catalyses the reaction carbamoyl phosphate + L-aspartate = N-carbamoyl-L-aspartate + phosphate + H(+). Its pathway is pyrimidine metabolism; UMP biosynthesis via de novo pathway; (S)-dihydroorotate from bicarbonate: step 2/3. Catalyzes the condensation of carbamoyl phosphate and aspartate to form carbamoyl aspartate and inorganic phosphate, the committed step in the de novo pyrimidine nucleotide biosynthesis pathway. The protein is Aspartate carbamoyltransferase catalytic subunit of Sorangium cellulosum (strain So ce56) (Polyangium cellulosum (strain So ce56)).